Here is a 247-residue protein sequence, read N- to C-terminus: tRNA uridine(34) hydroxylase (247 aa).

Residues 123–217 form the Rhodanese domain; it reads ITKQDVIVDT…YLEDTQNKNN (95 aa). C177 (cysteine persulfide intermediate) is an active-site residue.

The protein belongs to the TrhO family.

It catalyses the reaction uridine(34) in tRNA + AH2 + O2 = 5-hydroxyuridine(34) in tRNA + A + H2O. In terms of biological role, catalyzes oxygen-dependent 5-hydroxyuridine (ho5U) modification at position 34 in tRNAs. The sequence is that of tRNA uridine(34) hydroxylase from Rickettsia bellii (strain RML369-C).